The following is a 230-amino-acid chain: Uracil-DNA glycosylase (230 aa).

Residue aspartate 70 is the Proton acceptor of the active site.

This sequence belongs to the uracil-DNA glycosylase (UDG) superfamily. UNG family.

Its subcellular location is the cytoplasm. It carries out the reaction Hydrolyzes single-stranded DNA or mismatched double-stranded DNA and polynucleotides, releasing free uracil.. In terms of biological role, excises uracil residues from the DNA which can arise as a result of misincorporation of dUMP residues by DNA polymerase or due to deamination of cytosine. The chain is Uracil-DNA glycosylase from Pseudomonas fluorescens (strain ATCC BAA-477 / NRRL B-23932 / Pf-5).